Here is a 228-residue protein sequence, read N- to C-terminus: C-type lectin domain-containing protein 88 (228 aa).

Positions 1-18 (MQFIFFGTLFSGLLLVCA) are cleaved as a signal peptide. S27 is a glycosylation site (O-linked (Xyl...) (chondroitin sulfate) serine). In terms of domain architecture, C-type lectin spans 88-218 (YSDSCYWVET…CTYLFYSICE (131 aa)). Disulfide bonds link C109/C217 and C188/C209. N220 carries N-linked (GlcNAc...) asparagine glycosylation.

The protein is C-type lectin domain-containing protein 88 of Caenorhabditis elegans.